A 374-amino-acid chain; its full sequence is tRNA-specific 2-thiouridylase MnmA (374 aa).

Residues G17–S24 and M43 each bind ATP. An interaction with target base in tRNA region spans residues N103–D105. C108 serves as the catalytic Nucleophile. The cysteines at positions 108 and 204 are disulfide-linked. G132 lines the ATP pocket. Positions K154–Q156 are interaction with tRNA. C204 functions as the Cysteine persulfide intermediate in the catalytic mechanism. The interaction with tRNA stretch occupies residues R316–Y317.

This sequence belongs to the MnmA/TRMU family.

Its subcellular location is the cytoplasm. The catalysed reaction is S-sulfanyl-L-cysteinyl-[protein] + uridine(34) in tRNA + AH2 + ATP = 2-thiouridine(34) in tRNA + L-cysteinyl-[protein] + A + AMP + diphosphate + H(+). In terms of biological role, catalyzes the 2-thiolation of uridine at the wobble position (U34) of tRNA, leading to the formation of s(2)U34. The chain is tRNA-specific 2-thiouridylase MnmA from Pseudomonas putida (strain GB-1).